Here is a 194-residue protein sequence, read N- to C-terminus: Cytochrome b-245 light chain (194 aa).

Topologically, residues 2-7 (GQIEWA) are cytoplasmic. Residues 8-30 (MWANEQALASGLILVAGGIVATA) traverse the membrane as a helical segment. Topologically, residues 31 to 35 (GRFTQ) are extracellular. The chain crosses the membrane as a helical span at residues 36–53 (WYFGTYAIAAGVLVCLLE). Over 54 to 69 (YPRGSRAKGSTLERCG) the chain is Cytoplasmic. Residues 70-80 (QRYLTAVLKLL) lie within the membrane without spanning it. The Cytoplasmic segment spans residues 81 to 86 (GPLSRN). The helical transmembrane segment at 87 to 104 (YYFRAALHLALSVPAGFL) threads the bilayer. Position 105 (Leu-105) is a topological domain, extracellular. A helical transmembrane segment spans residues 106 to 126 (ATILGTVCLVIASIIYLLAAV). Residues 127–194 (RGEQWTPIEP…NPIPVTDEVV (68 aa)) are Cytoplasmic-facing. The disordered stretch occupies residues 134 to 194 (IEPRPKERPQ…NPIPVTDEVV (61 aa)). At Thr-147 the chain carries Phosphothreonine. Lys-149 participates in a covalent cross-link: Glycyl lysine isopeptide (Lys-Gly) (interchain with G-Cter in ubiquitin).

The protein belongs to the p22phox family. In terms of assembly, component of the phagocyte NADPH oxidase core complex/cytochrome b558 complex, composed of CYBB (heavy chain (beta)) and CYBA (light chain (alpha)). Component of the phagocyte NADPH oxidase complex composed of an obligatory core heterodimer formed by the membrane proteins CYBA and CYBB and the cytosolic regulatory subunits NCF1/p47-phox, NCF2/p67-phox, NCF4/p40-phox and the small GTPase RAC1 or RAC2. Interacts with NCF1 (via SH3 domain). Interacts with SH3PXD2A. Interacts with DUOX1, DUOX2 and TPO. Interacts with NOX4; this interaction mediates superoxide generation. Interacts with calprotectin (S100A8/9). Interacts with GBP7. Interacts with NOXO1. Forms a heterodimer with NOX3 and is essential for activity and cell membrane localization of NOX3. Interacts with NOX1. In terms of processing, phosphorylation at Thr-147 enhances NADPH oxidase activity by promoting NCF1/p47-phox binding. Post-translationally, ubiquitinated at Lys-149 likely by RNF145.

The protein localises to the cell membrane. Its function is as follows. Subunit of NADPH oxidase complexes that is required for the NADPH oxidase activity that generates, in various cell types, superoxide from molecular oxygen utilizing NADPH as an electron donor. Subunit of the phagocyte NADPH oxidase complex that mediates the transfer of electrons from cytosolic NADPH to O2 to produce the superoxide anion (O2(-)). In the activated complex, electrons are first transferred from NADPH to flavin adenine dinucleotide (FAD) and subsequently transferred via two heme molecules to molecular oxygen, producing superoxide through an outer-sphere reaction. Activation of the NADPH oxidase complex is initiated by the assembly of cytosolic subunits of the NADPH oxidase complex with the core NADPH oxidase complex to form a complex at the plasma membrane or phagosomal membrane. This activation process is initiated by phosphorylation dependent binding of the cytosolic NCF1/p47-phox subunit to the C-terminus of CYBA/p22-phox. Aassociates with NOX3 to form a functional NADPH oxidase constitutively generating superoxide. This chain is Cytochrome b-245 light chain, found in Oryctolagus cuniculus (Rabbit).